The primary structure comprises 383 residues: Dual-specificity RNA methyltransferase RlmN (383 aa).

E95 (proton acceptor) is an active-site residue. Residues 101–349 (EETRGTLCVS…TTVRKTRGDD (249 aa)) enclose the Radical SAM core domain. C108 and C354 form a disulfide bridge. The [4Fe-4S] cluster site is built by C115, C119, and C122. Residues 180-181 (GE), S212, 234-236 (SLH), and N311 each bind S-adenosyl-L-methionine. C354 serves as the catalytic S-methylcysteine intermediate.

The protein belongs to the radical SAM superfamily. RlmN family. It depends on [4Fe-4S] cluster as a cofactor.

The protein localises to the cytoplasm. It carries out the reaction adenosine(2503) in 23S rRNA + 2 reduced [2Fe-2S]-[ferredoxin] + 2 S-adenosyl-L-methionine = 2-methyladenosine(2503) in 23S rRNA + 5'-deoxyadenosine + L-methionine + 2 oxidized [2Fe-2S]-[ferredoxin] + S-adenosyl-L-homocysteine. It catalyses the reaction adenosine(37) in tRNA + 2 reduced [2Fe-2S]-[ferredoxin] + 2 S-adenosyl-L-methionine = 2-methyladenosine(37) in tRNA + 5'-deoxyadenosine + L-methionine + 2 oxidized [2Fe-2S]-[ferredoxin] + S-adenosyl-L-homocysteine. Functionally, specifically methylates position 2 of adenine 2503 in 23S rRNA and position 2 of adenine 37 in tRNAs. m2A2503 modification seems to play a crucial role in the proofreading step occurring at the peptidyl transferase center and thus would serve to optimize ribosomal fidelity. The polypeptide is Dual-specificity RNA methyltransferase RlmN (Paraburkholderia phytofirmans (strain DSM 17436 / LMG 22146 / PsJN) (Burkholderia phytofirmans)).